A 277-amino-acid chain; its full sequence is MQHEAHTHGINMSALGRDKQSLSLEQETVAIEVPGLSLYYGEKQALFDVSMNIPKQRVTAFIGPSGCGKSTLLRTFNRMNDLVDGCRVEGAINLYGNNIYRKGEDVAELRRRVGMVFQKPNPFPKTIYENVVYGLRIQGINKKRVLDEAVEWALKGAALWDEVKDRLHDSALGLSGGQQQRLVIARTIAVEPEVLLLDEPCSALDPISTLKVEELIYELKSKFTIVIVTHNMQQAARVSDYTAFMYMGKLVEFGDTDTLFTNPAKKQTEDYITGRYG.

The ABC transporter domain maps to 31 to 272; sequence IEVPGLSLYY…PAKKQTEDYI (242 aa). 63 to 70 contacts ATP; it reads GPSGCGKS.

This sequence belongs to the ABC transporter superfamily. Phosphate importer (TC 3.A.1.7) family. In terms of assembly, the complex is composed of two ATP-binding proteins (PstB), two transmembrane proteins (PstC and PstA) and a solute-binding protein (PstS).

It localises to the cell inner membrane. It catalyses the reaction phosphate(out) + ATP + H2O = ADP + 2 phosphate(in) + H(+). Its function is as follows. Part of the ABC transporter complex PstSACB involved in phosphate import. Responsible for energy coupling to the transport system. This Pseudomonas fluorescens (strain ATCC BAA-477 / NRRL B-23932 / Pf-5) protein is Phosphate import ATP-binding protein PstB.